The sequence spans 557 residues: Urease subunit alpha (557 aa).

The region spanning 130 to 557 is the Urease domain; that stretch reads GFIDTHIHWV…LPLTQLYFIY (428 aa). 3 residues coordinate Ni(2+): His-135, His-137, and Lys-217. An N6-carboxylysine modification is found at Lys-217. Position 219 (His-219) interacts with substrate. Ni(2+)-binding residues include His-246 and His-272. His-320 (proton donor) is an active-site residue. Position 360 (Asp-360) interacts with Ni(2+).

It belongs to the metallo-dependent hydrolases superfamily. Urease alpha subunit family. As to quaternary structure, heterohexamer of 3 UreC (alpha) and 3 UreAB (gamma/beta) subunits. It depends on Ni cation as a cofactor. In terms of processing, carboxylation allows a single lysine to coordinate two nickel ions.

The protein localises to the cytoplasm. It catalyses the reaction urea + 2 H2O + H(+) = hydrogencarbonate + 2 NH4(+). The protein operates within nitrogen metabolism; urea degradation; CO(2) and NH(3) from urea (urease route): step 1/1. This Sulfurisphaera tokodaii (strain DSM 16993 / JCM 10545 / NBRC 100140 / 7) (Sulfolobus tokodaii) protein is Urease subunit alpha.